The chain runs to 454 residues: Probable xylan O-acetyltransferase 9 (454 aa).

At 1-15 (MKAPPPPSPVAKRAR) the chain is on the cytoplasmic side. A helical; Signal-anchor for type II membrane protein membrane pass occupies residues 16–36 (VSPFVFLLVLFLLLFSFLYGE). Over 37-454 (DLKELLGSQA…ELLYTKLFYP (418 aa)) the chain is Lumenal. Cystine bridges form between Cys-101-Cys-152, Cys-123-Cys-188, Cys-132-Cys-435, and Cys-352-Cys-431. Residues 175-177 (GDS) carry the GDS motif motif. Catalysis depends on Ser-177, which acts as the Nucleophile. Residues Asn-219, Asn-293, and Asn-394 are each glycosylated (N-linked (GlcNAc...) asparagine). Asp-430 (proton donor) is an active-site residue. The DXXH motif signature appears at 430–433 (DCVH). His-433 functions as the Proton acceptor in the catalytic mechanism.

Belongs to the PC-esterase family. TBL subfamily.

Its subcellular location is the golgi apparatus membrane. Its function is as follows. Probable xylan acetyltransferase required for 2-O- and 3-O-monoacetylation of xylosyl residues in xylan. Possesses extremely low activity in vitro. The protein is Probable xylan O-acetyltransferase 9 of Oryza sativa subsp. japonica (Rice).